The sequence spans 128 residues: 3-aminoacrylate deaminase RutC (128 aa).

Belongs to the RutC family. In terms of assembly, homotrimer.

It catalyses the reaction (Z)-3-aminoacrylate + H2O + H(+) = 3-oxopropanoate + NH4(+). Functionally, involved in pyrimidine catabolism. Catalyzes the deamination of 3-aminoacrylate to malonic semialdehyde, a reaction that can also occur spontaneously. RutC may facilitate the reaction and modulate the metabolic fitness, rather than catalyzing essential functions. In Escherichia coli O103:H2 (strain 12009 / EHEC), this protein is 3-aminoacrylate deaminase RutC.